The following is a 126-amino-acid chain: Large ribosomal subunit protein bL17 (126 aa).

It belongs to the bacterial ribosomal protein bL17 family. As to quaternary structure, part of the 50S ribosomal subunit. Contacts protein L32.

The protein is Large ribosomal subunit protein bL17 of Coxiella burnetii (strain CbuK_Q154) (Coxiella burnetii (strain Q154)).